The sequence spans 231 residues: DNA mismatch repair protein MutH (231 aa).

The protein belongs to the MutH family.

The protein resides in the cytoplasm. Functionally, sequence-specific endonuclease that cleaves unmethylated GATC sequences. It is involved in DNA mismatch repair. In Salmonella paratyphi A (strain ATCC 9150 / SARB42), this protein is DNA mismatch repair protein MutH.